A 414-amino-acid chain; its full sequence is Serine hydroxymethyltransferase (414 aa).

(6S)-5,6,7,8-tetrahydrofolate is bound by residues Leu121 and 125 to 127 (GHL). Lys229 carries the post-translational modification N6-(pyridoxal phosphate)lysine.

This sequence belongs to the SHMT family. As to quaternary structure, homodimer. Requires pyridoxal 5'-phosphate as cofactor.

It is found in the cytoplasm. The catalysed reaction is (6R)-5,10-methylene-5,6,7,8-tetrahydrofolate + glycine + H2O = (6S)-5,6,7,8-tetrahydrofolate + L-serine. The protein operates within one-carbon metabolism; tetrahydrofolate interconversion. Its pathway is amino-acid biosynthesis; glycine biosynthesis; glycine from L-serine: step 1/1. Functionally, catalyzes the reversible interconversion of serine and glycine with tetrahydrofolate (THF) serving as the one-carbon carrier. This reaction serves as the major source of one-carbon groups required for the biosynthesis of purines, thymidylate, methionine, and other important biomolecules. Also exhibits THF-independent aldolase activity toward beta-hydroxyamino acids, producing glycine and aldehydes, via a retro-aldol mechanism. In Thiobacillus denitrificans (strain ATCC 25259 / T1), this protein is Serine hydroxymethyltransferase.